A 2371-amino-acid chain; its full sequence is NBAS subunit of NRZ tethering complex (2371 aa).

An interaction with USE1 region spans residues 1-1035 (MAAPESGPAL…KTEATTKLHD (1035 aa)). 2 WD repeats span residues 130–169 (DPKP…LFVI) and 316–355 (QEQD…QQGE). Phosphoserine is present on residues Ser-473 and Ser-475. Residues 1036 to 2371 (MVDQLEQILS…TALRAAQHWV (1336 aa)) form an interaction with ZW10 and RINT1 region. Lys-1057 carries the post-translational modification N6-acetyllysine.

Component of the NRZ complex composed of NBAS, ZW10 and RINT1/TIP20L; NRZ associates with SNAREs STX18, USE1, BNIP1/SEC20L and SEC22B (the assembly has been described as syntaxin 18 complex); links NRZ to SNARE USE1. Broadly expressed, with highest levels in heart and skeletal muscle, and lowest levels in liver, small intestine and thymus. Well expressed in retinal ganglion cells, epidermal skin cells, and leukocytes. Up-regulated together with N-myc in some neuroblastoma cell lines.

The protein resides in the cytoplasm. It localises to the endoplasmic reticulum. It is found in the endoplasmic reticulum membrane. In terms of biological role, involved in Golgi-to-endoplasmic reticulum (ER) retrograde transport; the function is proposed to depend on its association in the NRZ complex which is believed to play a role in SNARE assembly at the ER. Required for normal embryonic development. May play a role in the nonsense-mediated decay pathway of mRNAs containing premature stop codons. This chain is NBAS subunit of NRZ tethering complex, found in Homo sapiens (Human).